Consider the following 433-residue polypeptide: tRNA-queuosine alpha-mannosyltransferase (433 aa).

Residues 194–244 (PAAKSHIQTSSPSSYPDVEPPEKMLNVAGTNQSHEPTSVTPHQETASPLCG) are disordered. Residues 221-239 (AGTNQSHEPTSVTPHQETA) are compositionally biased toward polar residues.

The protein belongs to the glycosyltransferase group 1 family. Glycosyltransferase 4 subfamily.

Its subcellular location is the cytoplasm. The protein localises to the nucleus. It catalyses the reaction queuosine(34) in tRNA(Asp) + GDP-alpha-D-mannose = O-4''-alpha-D-mannosylqueuosine(34) in tRNA(Asp) + GDP + H(+). Functionally, glycosyltransferase that specifically catalyzes mannosylation of cytoplasmic tRNA(Asp) modified with queuosine at position 34 (queuosine(34)). Mannosylates the cyclopentene moiety of queuosine(34) in tRNA(Asp) to form mannosyl-queuosine(34). Mannosylation of queuosine(34) in tRNA(Asp) is required to slow-down elongation at cognate codons, GAC and GAU, thereby regulating protein translation. The polypeptide is tRNA-queuosine alpha-mannosyltransferase (gtdc1) (Danio rerio (Zebrafish)).